A 683-amino-acid polypeptide reads, in one-letter code: MANDPRKLLVTCALPYANGSIHLGHMLEHIQADIWVRYQRLRGNTVNFICADDAHGTPIMLKAQQMGMTPEAMIEMVSEEHQRDFAGFDISFDNYHSTHSDENRELASHIYLQLKKNGFISSRTISQLFDPEKEMFLPDRFVKGTCPKCKSEDQYGDNCDACGETYSPTELINPKSAVSGATPVMKDSEHFFFDLPQFESMLKEWTRSGSLQSETANKMQEWFEGGLQQWDISRDAPYFGFEIPGEKDKFFYVWLDAPIGYMGSFKNLCDKRGDLDFNEYWNKDSKTELYHFIGKDIVYFHSLFWPAMLDGSGFRKPTNVFVHGYVTVNGAKMSKSKGTFVKASTYLNHLDPECLRYYYAAKLNNRIDDLDLNLEDFTQRVNADVVNKIVNLASRNAGFITKRFDGKLSAHFAEPELYAEFAGAADRIAELFEAREFGRAIREITALADKANQYVDEKAPWVVAKQEGQDQALQDICTVGINLFRVLMTYLKPVMPALAERTEAFLNQELTWEGVATPLTDHAVTPFKALFNRIDPKQVEAMIEASKAEAAAEKAAADAAKPKSAETELSKDPLAAEIEFDDFAKVDLRIAKILSCEAVEKSDKLLKFELDIGGETRQVFSGIKSAYQPEDLIGKYTVVVANLKPRKMKFGMSEGMILAAGPGGSDLWLLEPHQGAQAGMRVM.

The 'HIGH' region motif lies at 15 to 25 (PYANGSIHLGH). Positions 146, 149, 159, and 162 each coordinate Zn(2+). The short motif at 332 to 336 (KMSKS) is the 'KMSKS' region element. Lys-335 is an ATP binding site. A tRNA-binding domain is found at 582–683 (DFAKVDLRIA…QGAQAGMRVM (102 aa)).

Belongs to the class-I aminoacyl-tRNA synthetase family. MetG type 1 subfamily. Homodimer. Zn(2+) serves as cofactor.

The protein localises to the cytoplasm. The catalysed reaction is tRNA(Met) + L-methionine + ATP = L-methionyl-tRNA(Met) + AMP + diphosphate. In terms of biological role, is required not only for elongation of protein synthesis but also for the initiation of all mRNA translation through initiator tRNA(fMet) aminoacylation. This is Methionine--tRNA ligase from Vibrio cholerae serotype O1 (strain ATCC 39315 / El Tor Inaba N16961).